A 268-amino-acid polypeptide reads, in one-letter code: Shikimate dehydrogenase (NADP(+)) (268 aa).

Shikimate-binding positions include 13-15 and Thr-60; that span reads SLS. The active-site Proton acceptor is the Lys-64. Residue Glu-76 coordinates NADP(+). 2 residues coordinate shikimate: Asn-85 and Asp-100. Residues 124–128, 148–153, and Ile-209 contribute to the NADP(+) site; these read GAGGA and NRTMAR. Tyr-211 serves as a coordination point for shikimate. NADP(+) is bound at residue Gly-232.

This sequence belongs to the shikimate dehydrogenase family. Homodimer.

It carries out the reaction shikimate + NADP(+) = 3-dehydroshikimate + NADPH + H(+). It participates in metabolic intermediate biosynthesis; chorismate biosynthesis; chorismate from D-erythrose 4-phosphate and phosphoenolpyruvate: step 4/7. Its function is as follows. Involved in the biosynthesis of the chorismate, which leads to the biosynthesis of aromatic amino acids. Catalyzes the reversible NADPH linked reduction of 3-dehydroshikimate (DHSA) to yield shikimate (SA). This chain is Shikimate dehydrogenase (NADP(+)), found in Staphylococcus aureus (strain MSSA476).